A 353-amino-acid polypeptide reads, in one-letter code: ATP-dependent kinase YFH7 (353 aa).

31–39 (GSPGSGKST) contributes to the ATP binding site.

The protein belongs to the YFH7 family.

Functionally, ATP-dependent kinase that could be involved in endoplasmic reticulum membrane assembly. The sequence is that of ATP-dependent kinase YFH7 (YFH7) from Saccharomyces cerevisiae (strain ATCC 204508 / S288c) (Baker's yeast).